A 96-amino-acid polypeptide reads, in one-letter code: Secreted RxLR effector protein 123 (96 aa).

Residues 1-22 (MVGAYYVGIALLVAGGSQTAAG) form the signal peptide. The short motif at 49-70 (RFLRKSRNPKDNLMLSEANEER) is the RxLR-dEER element. The tract at residues 57-96 (PKDNLMLSEANEERTPSSPSNSLTEFIVSEPITTNVMRTE) is disordered. A compositionally biased stretch (polar residues) spans 87-96 (PITTNVMRTE).

The protein belongs to the RxLR effector family.

It is found in the secreted. The protein localises to the host nucleus. Its subcellular location is the host cytoplasm. Its function is as follows. Secreted effector that dos not suppress the host cell death induced by cell death-inducing proteins. The sequence is that of Secreted RxLR effector protein 123 from Plasmopara viticola (Downy mildew of grapevine).